We begin with the raw amino-acid sequence, 442 residues long: 3-phosphoshikimate 1-carboxyvinyltransferase (442 aa).

Residues K25, S26, and R30 each coordinate 3-phosphoshikimate. Residue K25 participates in phosphoenolpyruvate binding. The phosphoenolpyruvate site is built by G97 and R125. 3-phosphoshikimate is bound by residues S170, S171, Q172, D323, and K350. Q172 is a binding site for phosphoenolpyruvate. D323 functions as the Proton acceptor in the catalytic mechanism. Positions 354 and 399 each coordinate phosphoenolpyruvate.

This sequence belongs to the EPSP synthase family. In terms of assembly, monomer.

It localises to the cytoplasm. It carries out the reaction 3-phosphoshikimate + phosphoenolpyruvate = 5-O-(1-carboxyvinyl)-3-phosphoshikimate + phosphate. Its pathway is metabolic intermediate biosynthesis; chorismate biosynthesis; chorismate from D-erythrose 4-phosphate and phosphoenolpyruvate: step 6/7. In terms of biological role, catalyzes the transfer of the enolpyruvyl moiety of phosphoenolpyruvate (PEP) to the 5-hydroxyl of shikimate-3-phosphate (S3P) to produce enolpyruvyl shikimate-3-phosphate and inorganic phosphate. The polypeptide is 3-phosphoshikimate 1-carboxyvinyltransferase (Bartonella tribocorum (strain CIP 105476 / IBS 506)).